Here is a 177-residue protein sequence, read N- to C-terminus: Inorganic pyrophosphatase (177 aa).

Residues Lys30, Arg44, and Tyr56 each contribute to the substrate site. Mg(2+) is bound by residues Asp66, Asp71, and Asp103. Residue Tyr142 coordinates substrate.

The protein belongs to the PPase family. Homohexamer. It depends on Mg(2+) as a cofactor.

The protein localises to the cytoplasm. It carries out the reaction diphosphate + H2O = 2 phosphate + H(+). Catalyzes the hydrolysis of inorganic pyrophosphate (PPi) forming two phosphate ions. The protein is Inorganic pyrophosphatase of Caulobacter vibrioides (strain ATCC 19089 / CIP 103742 / CB 15) (Caulobacter crescentus).